Reading from the N-terminus, the 297-residue chain is Light-independent protochlorophyllide reductase iron-sulfur ATP-binding protein (297 aa).

Residues 41-46 and lysine 70 contribute to the ATP site; that span reads GIGKST. Position 45 (serine 45) interacts with Mg(2+). [4Fe-4S] cluster contacts are provided by cysteine 126 and cysteine 160. Residues 211 to 212 and 235 to 237 each bind ATP; these read NR and PDL.

Belongs to the NifH/BchL/ChlL family. In terms of assembly, homodimer. Protochlorophyllide reductase is composed of three subunits; BchL, BchN and BchB. [4Fe-4S] cluster is required as a cofactor.

The enzyme catalyses chlorophyllide a + oxidized 2[4Fe-4S]-[ferredoxin] + 2 ADP + 2 phosphate = protochlorophyllide a + reduced 2[4Fe-4S]-[ferredoxin] + 2 ATP + 2 H2O. It participates in porphyrin-containing compound metabolism; bacteriochlorophyll biosynthesis (light-independent). In terms of biological role, component of the dark-operative protochlorophyllide reductase (DPOR) that uses Mg-ATP and reduced ferredoxin to reduce ring D of protochlorophyllide (Pchlide) to form chlorophyllide a (Chlide). This reaction is light-independent. The L component serves as a unique electron donor to the NB-component of the complex, and binds Mg-ATP. This chain is Light-independent protochlorophyllide reductase iron-sulfur ATP-binding protein, found in Cereibacter sphaeroides (strain KD131 / KCTC 12085) (Rhodobacter sphaeroides).